We begin with the raw amino-acid sequence, 321 residues long: MQNRNKNNWMKKWVIRSISILIILNIIAWPSISYAYPIFAQQSYENPREATGRIVCANCHLAKKPVDIEVPQSVFPNTVFEAVVKIPYDKQIKQVLGNGKKGGINVGAVLILPEGFELAPYNRIPAEMKDKIGDLALFQNYRPDKRNIIVIGPVPGKAYSEIVFPLISPDPATNKEVHFLKYPIYLGGNRGRGQIYPDGSKSNNTIYNASIAGKVTKILRREKGGYEITIEDTLEGRRVVDIVPPGPELIISEGEFIKIDQPLTNNPNLGGFGQGDTEIVLQNPLRIQGLLLFFVSVIMAQILLVLKKKQFEKVQLAEMNL.

A signal peptide spans 1-35 (MQNRNKNNWMKKWVIRSISILIILNIIAWPSISYA). Residues Y36, C56, C59, and H60 each coordinate heme. The chain crosses the membrane as a helical span at residues 287–306 (IQGLLLFFVSVIMAQILLVL).

The protein belongs to the cytochrome f family. As to quaternary structure, the 4 large subunits of the cytochrome b6-f complex are cytochrome b6, subunit IV (17 kDa polypeptide, petD), cytochrome f and the Rieske protein, while the 4 small subunits are PetG, PetL, PetM and PetN. The complex functions as a dimer. It depends on heme as a cofactor.

The protein localises to the plastid. Its subcellular location is the chloroplast thylakoid membrane. Functionally, component of the cytochrome b6-f complex, which mediates electron transfer between photosystem II (PSII) and photosystem I (PSI), cyclic electron flow around PSI, and state transitions. This chain is Cytochrome f, found in Psilotum nudum (Whisk fern).